Here is an 852-residue protein sequence, read N- to C-terminus: Cytochrome P450 monooxygenase mpaDE (852 aa).

At 1 to 6 (MDYLII) the chain is on the lumenal side. Residues 7–29 (IRITAVAVVLYLTRYVCCLYLHL) traverse the membrane as a helical segment. Topologically, residues 30–852 (QDVPGPLFAK…DLEDAMEGTK (823 aa)) are cytoplasmic. Cys448 provides a ligand contact to heme.

The protein belongs to the cytochrome P450 family. It depends on heme as a cofactor.

It localises to the endoplasmic reticulum membrane. The catalysed reaction is 5-methylorsellinate + reduced [NADPH--hemoprotein reductase] + O2 = 4,6-dihydroxy-2-(hydroxymethyl)-3-methylbenzoate + oxidized [NADPH--hemoprotein reductase] + H2O + H(+). It carries out the reaction 4,6-dihydroxy-2-(hydroxymethyl)-3-methylbenzoate + H(+) = 5,7-dihydroxy-4-methylphthalide + H2O. The protein operates within secondary metabolite biosynthesis; terpenoid biosynthesis. Functionally, cytochrome P450 monooxygenase; part of the gene cluster that mediates the biosynthesis of mycophenolic acid (MPA), the first isolated antibiotic natural product in the world obtained from a culture of Penicillium brevicompactum in 1893. MpaDE is an endoplasmic reticulum-bound enzyme that catalyzes the conversion of 5-methylorsellinic acid (5MOA) into the phthalide compound 5,7-dihydroxy-4,6-dimethylphthalide (DHMP). MpaDE first catalyzes hydroxylation of 5-MOA to 4,6-dihydroxy-2-(hydroxymethyl)-3-methylbenzoic acid (DHMB), and then acts as a lactone synthase that catalyzes the ring closure to convert DHMB into DHMP. The first step of the pathway is the synthesis of 5-methylorsellinic acid (5MOA) by the cytosolic polyketide synthase mpaC. 5MOA is then converted to the phthalide compound 5,7-dihydroxy-4,6-dimethylphthalide (DHMP) by the endoplasmic reticulum-bound cytochrome P450 monooxygenase mpaDE. MpaDE first catalyzes hydroxylation of 5-MOA to 4,6-dihydroxy-2-(hydroxymethyl)-3-methylbenzoic acid (DHMB). MpaDE then acts as a lactone synthase that catalyzes the ring closure to convert DHMB into DHMP. The next step is the prenylation of DHMP by the Golgi apparatus-associated prenyltransferase mpaA to yield farnesyl-DHMP (FDHMP). The ER-bound oxygenase mpaB then mediates the oxidative cleavage the C19-C20 double bond in FDHMP to yield FDHMP-3C via a mycophenolic aldehyde intermediate. The O-methyltransferase mpaG catalyzes the methylation of FDHMP-3C to yield MFDHMP-3C. After the cytosolic methylation of FDHMP-3C, MFDHMP-3C enters into peroxisomes probably via free diffusion due to its low molecular weight. Upon a peroxisomal CoA ligation reaction, catalyzed by a beta-oxidation component enzyme acyl-CoA ligase ACL891, MFDHMP-3C-CoA would then be restricted to peroxisomes for the following beta-oxidation pathway steps. The peroxisomal beta-oxidation machinery than converts MFDHMP-3C-CoA into MPA_CoA, via a beta-oxidation chain-shortening process. Finally mpaH acts as a peroxisomal acyl-CoA hydrolase with high substrate specificity toward MPA-CoA to release the final product MPA. This is Cytochrome P450 monooxygenase mpaDE from Penicillium roqueforti (strain FM164).